The chain runs to 232 residues: Sugar fermentation stimulation protein homolog (232 aa).

It belongs to the SfsA family.

The chain is Sugar fermentation stimulation protein homolog from Brucella anthropi (strain ATCC 49188 / DSM 6882 / CCUG 24695 / JCM 21032 / LMG 3331 / NBRC 15819 / NCTC 12168 / Alc 37) (Ochrobactrum anthropi).